Reading from the N-terminus, the 3901-residue chain is Nonribosomal peptide synthetase opaA (3901 aa).

The interval 248 to 641 (HNAQHHPSVV…HRKDNQIKIR (394 aa)) is adenylation 1. Residues 780–854 (LPVTANEIVV…DMATRLTRIK (75 aa)) form the Carrier 1 domain. At Ser815 the chain carries O-(pantetheine 4'-phosphoryl)serine. A condensation 1 region spans residues 891-1164 (DAYPCSALQE…IATVPIRINL (274 aa)). Residues 1328 to 1725 (QSHAQKTPKS…GRIGNQVKLR (398 aa)) are adenylation 2. Residues 1858–1936 (RTPLDTERDL…QIAAQAATRA (79 aa)) enclose the Carrier 2 domain. The residue at position 1895 (Ser1895) is an O-(pantetheine 4'-phosphoryl)serine. The epimerase stretch occupies residues 1953-2261 (KLTPIQQLFF…KDARRRLTRN (309 aa)). Residues 2403–2826 (ENLYPCAPIQ…LVSTDHKRLL (424 aa)) are condensation 2. The adenylation 3 stretch occupies residues 2846 to 3243 (QQHVRETPDA…GRKDSQIKIR (398 aa)). The Carrier 3 domain maps to 3375-3451 (LPSTAGEQLL…ALAARSRSKD (77 aa)). Ser3412 is subject to O-(pantetheine 4'-phosphoryl)serine. The tract at residues 3509 to 3837 (HHFSFAVEGK…EDLKTHFTLN (329 aa)) is condensation 3.

The protein belongs to the NRP synthetase family.

Its function is as follows. Nonribosomal peptide synthetase; part of the gene cluster that mediates the biosynthesis of oxepinamides, derivatives of anthranilyl-containing tripeptides that share an oxepin ring and a fused pyrimidinone moiety. The nonribosomal peptide synthetase (NRPS) opaA assembles the quinazolinone core with D-Phe incorporation. The first adenylation domain (A1) of opaA loads and activates anthranilic acid whereas the second A domain (A2) is for activating of L-Phe, which is then converted to D-form by the E domain. The third A domain (A3) is responsible for L-Ile activation and the terminal condensation domain C3 for cyclization and releasing the NRPS product protuboxepin K. The cytochrome P450 monooxygenase opaB then catalyzes alone the oxepin ring formation to convert protuboxepin K into protuboxepin A. The flavoenzyme opaC installs subsequently one hydroxyl group at the oxepin ring, accompanied by double bond migration, to form 15-epi-oxepinamide E. The epimerase opaE changes the D-Phe residue back to L-form, leading to oxepinamide E, which is further methylated at the hydroxyl group at C-12 by the O-methyltransferase OpaF to yield oxepinamide F. The protein is Nonribosomal peptide synthetase opaA of Aspergillus ustus.